The primary structure comprises 440 residues: Serine hydroxymethyltransferase (440 aa).

Residues Leu119 and 123–125 (GHL) contribute to the (6S)-5,6,7,8-tetrahydrofolate site. Lys228 is subject to N6-(pyridoxal phosphate)lysine. Residue 370-372 (SPF) coordinates (6S)-5,6,7,8-tetrahydrofolate.

The protein belongs to the SHMT family. As to quaternary structure, homodimer. Requires pyridoxal 5'-phosphate as cofactor.

The protein resides in the cytoplasm. It carries out the reaction (6R)-5,10-methylene-5,6,7,8-tetrahydrofolate + glycine + H2O = (6S)-5,6,7,8-tetrahydrofolate + L-serine. The protein operates within one-carbon metabolism; tetrahydrofolate interconversion. It participates in amino-acid biosynthesis; glycine biosynthesis; glycine from L-serine: step 1/1. In terms of biological role, catalyzes the reversible interconversion of serine and glycine with tetrahydrofolate (THF) serving as the one-carbon carrier. This reaction serves as the major source of one-carbon groups required for the biosynthesis of purines, thymidylate, methionine, and other important biomolecules. Also exhibits THF-independent aldolase activity toward beta-hydroxyamino acids, producing glycine and aldehydes, via a retro-aldol mechanism. This is Serine hydroxymethyltransferase from Chlorobaculum tepidum (strain ATCC 49652 / DSM 12025 / NBRC 103806 / TLS) (Chlorobium tepidum).